The primary structure comprises 357 residues: UDP-N-acetylglucosamine--N-acetylmuramyl-(pentapeptide) pyrophosphoryl-undecaprenol N-acetylglucosamine transferase (357 aa).

UDP-N-acetyl-alpha-D-glucosamine is bound by residues 13-15 (TGG), asparagine 125, arginine 161, serine 189, isoleucine 243, and glutamine 288.

This sequence belongs to the glycosyltransferase 28 family. MurG subfamily.

It is found in the cell inner membrane. It carries out the reaction di-trans,octa-cis-undecaprenyl diphospho-N-acetyl-alpha-D-muramoyl-L-alanyl-D-glutamyl-meso-2,6-diaminopimeloyl-D-alanyl-D-alanine + UDP-N-acetyl-alpha-D-glucosamine = di-trans,octa-cis-undecaprenyl diphospho-[N-acetyl-alpha-D-glucosaminyl-(1-&gt;4)]-N-acetyl-alpha-D-muramoyl-L-alanyl-D-glutamyl-meso-2,6-diaminopimeloyl-D-alanyl-D-alanine + UDP + H(+). The protein operates within cell wall biogenesis; peptidoglycan biosynthesis. Functionally, cell wall formation. Catalyzes the transfer of a GlcNAc subunit on undecaprenyl-pyrophosphoryl-MurNAc-pentapeptide (lipid intermediate I) to form undecaprenyl-pyrophosphoryl-MurNAc-(pentapeptide)GlcNAc (lipid intermediate II). The sequence is that of UDP-N-acetylglucosamine--N-acetylmuramyl-(pentapeptide) pyrophosphoryl-undecaprenol N-acetylglucosamine transferase from Bordetella parapertussis (strain 12822 / ATCC BAA-587 / NCTC 13253).